The chain runs to 210 residues: Two-component response regulator ORR7 (210 aa).

The interval 53–92 (VVPLHDNASAEDDDDDEEDDDEDDDDDDDEDDEEEAAPPY) is disordered. Positions 61 to 88 (SAEDDDDDEEDDDEDDDDDDDEDDEEEA) are enriched in acidic residues. The 114-residue stretch at 92-205 (YVMAVDDSSV…VRPADISRIT (114 aa)) folds into the Response regulatory domain. D142 carries the 4-aspartylphosphate modification.

Belongs to the ARR family. Type-A subfamily. Two-component system major event consists of a His-to-Asp phosphorelay between a sensor histidine kinase (HK) and a response regulator (RR). In plants, the His-to-Asp phosphorelay involves an additional intermediate named Histidine-containing phosphotransfer protein (HPt). This multistep phosphorelay consists of a His-Asp-His-Asp sequential transfer of a phosphate group between first a His and an Asp of the HK protein, followed by the transfer to a conserved His of the HPt protein and finally the transfer to an Asp in the receiver domain of the RR protein.

Its function is as follows. Functions as a response regulator involved in His-to-Asp phosphorelay signal transduction system. Phosphorylation of the Asp residue in the receiver domain activates the ability of the protein to promote the transcription of target genes. Type-A response regulators seem to act as negative regulators of the cytokinin signaling. In Oryza sativa subsp. japonica (Rice), this protein is Two-component response regulator ORR7.